Reading from the N-terminus, the 391-residue chain is DNA replication and repair protein RecF (391 aa).

ATP is bound at residue 30-37 (GSNGQGKT).

It belongs to the RecF family.

Its subcellular location is the cytoplasm. In terms of biological role, the RecF protein is involved in DNA metabolism; it is required for DNA replication and normal SOS inducibility. RecF binds preferentially to single-stranded, linear DNA. It also seems to bind ATP. The polypeptide is DNA replication and repair protein RecF (Saccharopolyspora erythraea (strain ATCC 11635 / DSM 40517 / JCM 4748 / NBRC 13426 / NCIMB 8594 / NRRL 2338)).